We begin with the raw amino-acid sequence, 380 residues long: MEEVKKRDCMEKARPFISMVVLQVGLAGMDILSKAVLNKGMSNYVLVVYRHAVATIVMAPFAFYFDKKVRPKMTLMIFFKISLLGLLEPVIDQNLYYLGMKYTTATFATAMYNVLPAITFVLAYIFGLERVKLRCIRSTGKVVGTLATVGGAMIMTLVKGPVLDLFWTKGVSAHNTAGTDIHSAIKGAVLVTIGCFSYACFMILQAITLRTYPAELSLTAWICLMGTIEGTAVALVMEKGNPSAWAIGWDTKLLTATYSGIVCSALAYYVGGVVMKTRGPVFVTAFSPLCMIIVAIMSTIIFAEQMYLGRVLGAVVICAGLYLVIWGKGKDYKYNSTLQLDDESAQPKLELSGNGKDNVDHEVITISKQGEQRRTAVETV.

A run of 10 helical transmembrane segments spans residues 16–36, 45–65, 71–91, 107–127, 142–162, 187–207, 216–236, 254–274, 282–302, and 306–326; these read FISM…SKAV, VLVV…AFYF, PKMT…EPVI, FATA…YIFG, VVGT…KGPV, GAVL…LQAI, LSLT…VALV, LTAT…GGVV, FVTA…TIIF, and MYLG…LVIW. Residues 27–134 enclose the EamA 1 domain; the sequence is AGMDILSKAV…IFGLERVKLR (108 aa). One can recognise an EamA 2 domain in the interval 196-325; sequence FSYACFMILQ…VICAGLYLVI (130 aa).

Belongs to the drug/metabolite transporter (DMT) superfamily. Plant drug/metabolite exporter (P-DME) (TC 2.A.7.4) family.

Its subcellular location is the membrane. This Arabidopsis thaliana (Mouse-ear cress) protein is WAT1-related protein At2g37460.